Consider the following 102-residue polypeptide: Small ribosomal subunit protein uS10 (102 aa).

The protein belongs to the universal ribosomal protein uS10 family. As to quaternary structure, part of the 30S ribosomal subunit.

Functionally, involved in the binding of tRNA to the ribosomes. The protein is Small ribosomal subunit protein uS10 of Methanothrix thermoacetophila (strain DSM 6194 / JCM 14653 / NBRC 101360 / PT) (Methanosaeta thermophila).